The following is a 337-amino-acid chain: Monoacylglycerol lipase ABHD6 (337 aa).

Over 1 to 8 (MDLDVVNM) the chain is Extracellular. A helical; Signal-anchor for type II membrane protein membrane pass occupies residues 9-29 (FVIAGGTLAIPILAFVASFLL). Over 30-337 (WPSALIRIYY…HNTDNNKKLD (308 aa)) the chain is Cytoplasmic. An AB hydrolase-1 domain is found at 72–313 (PSILMLHGFS…CGHSVVMERP (242 aa)). (9Z)-octadecenoate is bound at residue Phe80. The active-site Nucleophile is the Ser148. Met149 contributes to the (9Z)-octadecenoate binding site. Active-site charge relay system residues include Asp278 and His306. His306 is a (9Z)-octadecenoate binding site.

It belongs to the AB hydrolase superfamily.

Its subcellular location is the late endosome membrane. It localises to the lysosome membrane. The protein localises to the mitochondrion membrane. It carries out the reaction Hydrolyzes glycerol monoesters of long-chain fatty acids.. The catalysed reaction is 1-octanoylglycerol + H2O = octanoate + glycerol + H(+). The enzyme catalyses 1-decanoylglycerol + H2O = decanoate + glycerol + H(+). It catalyses the reaction 1-dodecanoylglycerol + H2O = dodecanoate + glycerol + H(+). It carries out the reaction 1-tetradecanoylglycerol + H2O = tetradecanoate + glycerol + H(+). The catalysed reaction is 2-hexadecanoylglycerol + H2O = glycerol + hexadecanoate + H(+). The enzyme catalyses 2-(9Z-octadecenoyl)-glycerol + H2O = glycerol + (9Z)-octadecenoate + H(+). It catalyses the reaction 1-(9Z-octadecenoyl)-glycerol + H2O = glycerol + (9Z)-octadecenoate + H(+). It carries out the reaction 2-(9Z,12Z-octadecadienoyl)-glycerol + H2O = (9Z,12Z)-octadecadienoate + glycerol + H(+). The catalysed reaction is 2-(5Z,8Z,11Z,14Z-eicosatetraenoyl)-glycerol + H2O = glycerol + (5Z,8Z,11Z,14Z)-eicosatetraenoate + H(+). The enzyme catalyses 1-(5Z,8Z,11Z,14Z-eicosatetraenoyl)-glycerol + H2O = glycerol + (5Z,8Z,11Z,14Z)-eicosatetraenoate + H(+). It catalyses the reaction 1-(9Z,12Z-octadecadienoyl)-glycerol + H2O = (9Z,12Z)-octadecadienoate + glycerol + H(+). It carries out the reaction 3-(9Z-octadecenoyl)-sn-glycero-1-phospho-(3'-(9Z-octadecenoyl)-1'-sn-glycerol) + H2O = 3-(9Z-octadecenoyl)-sn-glycero-1-phospho-(1'-sn-glycerol) + (9Z)-octadecenoate + H(+). The catalysed reaction is (S,S)-2-(9Z-octadecenoyl)-sn-glycero-1-phospho-(2'-(9Z-octadecenoyl)-1'-sn-glycerol) + H2O = (S,S)-2-(9Z-octadecenoyl)-sn-glycero-1-phospho-(1'-sn-glycerol) + (9Z)-octadecenoate + H(+). The enzyme catalyses (R,R)-2-(9Z-octadecenoyl)-sn-glycero-3-phospho-(2'-(9Z-octadecenoyl)-3'-sn-glycerol) + H2O = (R,R)-2-(9Z-octadecenoyl)-sn-glycero-3-phospho-(3'-sn-glycerol) + (9Z)-octadecenoate + H(+). Lipase that preferentially hydrolysis medium-chain saturated monoacylglycerols including 2-arachidonoylglycerol. Through 2-arachidonoylglycerol degradation may regulate endocannabinoid signaling pathways. Also has a lysophosphatidyl lipase activity with a preference for lysophosphatidylglycerol among other lysophospholipids. Also able to degrade bis(monoacylglycero)phosphate (BMP) and constitutes the major enzyme for BMP catabolism. BMP, also known as lysobisphosphatidic acid, is enriched in late endosomes and lysosomes and plays a key role in the formation of intraluminal vesicles and in lipid sorting. This chain is Monoacylglycerol lipase ABHD6, found in Homo sapiens (Human).